We begin with the raw amino-acid sequence, 269 residues long: 4-hydroxy-tetrahydrodipicolinate reductase (269 aa).

An NAD(+)-binding site is contributed by 9–14; sequence GVAGRM. R36 contributes to the NADP(+) binding site. Residues 99–101 and 123–126 contribute to the NAD(+) site; these read GTT and APNM. H156 serves as the catalytic Proton donor/acceptor. A (S)-2,3,4,5-tetrahydrodipicolinate-binding site is contributed by H157. The active-site Proton donor is the K160. Position 166 to 167 (166 to 167) interacts with (S)-2,3,4,5-tetrahydrodipicolinate; it reads GT.

This sequence belongs to the DapB family.

It localises to the cytoplasm. The catalysed reaction is (S)-2,3,4,5-tetrahydrodipicolinate + NAD(+) + H2O = (2S,4S)-4-hydroxy-2,3,4,5-tetrahydrodipicolinate + NADH + H(+). It carries out the reaction (S)-2,3,4,5-tetrahydrodipicolinate + NADP(+) + H2O = (2S,4S)-4-hydroxy-2,3,4,5-tetrahydrodipicolinate + NADPH + H(+). It functions in the pathway amino-acid biosynthesis; L-lysine biosynthesis via DAP pathway; (S)-tetrahydrodipicolinate from L-aspartate: step 4/4. Its function is as follows. Catalyzes the conversion of 4-hydroxy-tetrahydrodipicolinate (HTPA) to tetrahydrodipicolinate. In Methylococcus capsulatus (strain ATCC 33009 / NCIMB 11132 / Bath), this protein is 4-hydroxy-tetrahydrodipicolinate reductase.